We begin with the raw amino-acid sequence, 129 residues long: Transcription antitermination protein NusB (129 aa).

It belongs to the NusB family.

Its function is as follows. Involved in transcription antitermination. Required for transcription of ribosomal RNA (rRNA) genes. Binds specifically to the boxA antiterminator sequence of the ribosomal RNA (rrn) operons. This chain is Transcription antitermination protein NusB, found in Bacillus licheniformis (strain ATCC 14580 / DSM 13 / JCM 2505 / CCUG 7422 / NBRC 12200 / NCIMB 9375 / NCTC 10341 / NRRL NRS-1264 / Gibson 46).